The sequence spans 91 residues: UPF0250 protein NMA1380 (91 aa).

It belongs to the UPF0250 family.

The polypeptide is UPF0250 protein NMA1380 (Neisseria meningitidis serogroup A / serotype 4A (strain DSM 15465 / Z2491)).